Here is a 484-residue protein sequence, read N- to C-terminus: BAHD acyltransferase DCR (484 aa).

H168 (proton acceptor) is an active-site residue. The disordered stretch occupies residues 211-233; it reads LDLTAPKDPNETSNGEDAANPTV. D394 (proton acceptor) is an active-site residue. Positions 452–484 are disordered; it reads EEEEDDGKKLTNGNGHVNGNGNGYVNGNGNGFV. Residues 467–484 are compositionally biased toward gly residues; that stretch reads HVNGNGNGYVNGNGNGFV.

This sequence belongs to the plant acyltransferase family. As to expression, expressed in root caps and lateral root emerging sites, in trichomes, in epidermis in stems, sepals and anther filaments, and in pollen grains and torpedo stage seeds.

It is found in the cytoplasm. It localises to the cytosol. Functionally, required for incorporation of 9(10),16-dihydroxy-hexadecanoic acid into cutin. In Arabidopsis thaliana (Mouse-ear cress), this protein is BAHD acyltransferase DCR (DCR).